The primary structure comprises 164 residues: SsrA-binding protein (164 aa).

It belongs to the SmpB family.

The protein localises to the cytoplasm. Required for rescue of stalled ribosomes mediated by trans-translation. Binds to transfer-messenger RNA (tmRNA), required for stable association of tmRNA with ribosomes. tmRNA and SmpB together mimic tRNA shape, replacing the anticodon stem-loop with SmpB. tmRNA is encoded by the ssrA gene; the 2 termini fold to resemble tRNA(Ala) and it encodes a 'tag peptide', a short internal open reading frame. During trans-translation Ala-aminoacylated tmRNA acts like a tRNA, entering the A-site of stalled ribosomes, displacing the stalled mRNA. The ribosome then switches to translate the ORF on the tmRNA; the nascent peptide is terminated with the 'tag peptide' encoded by the tmRNA and targeted for degradation. The ribosome is freed to recommence translation, which seems to be the essential function of trans-translation. The chain is SsrA-binding protein from Gluconobacter oxydans (strain 621H) (Gluconobacter suboxydans).